The primary structure comprises 165 residues: Chorismate pyruvate-lyase (165 aa).

Substrate contacts are provided by Arg77, Leu115, and Glu156.

The protein belongs to the UbiC family. As to quaternary structure, monomer.

The protein resides in the cytoplasm. The catalysed reaction is chorismate = 4-hydroxybenzoate + pyruvate. Its pathway is cofactor biosynthesis; ubiquinone biosynthesis. Functionally, removes the pyruvyl group from chorismate, with concomitant aromatization of the ring, to provide 4-hydroxybenzoate (4HB) for the ubiquinone pathway. The sequence is that of Chorismate pyruvate-lyase from Salmonella typhi.